The following is an 81-amino-acid chain: ATP synthase subunit c (81 aa).

A run of 2 helical transmembrane segments spans residues 7–27 and 55–75; these read LVAI…AIGF and IAGL…FFIF.

The protein belongs to the ATPase C chain family. As to quaternary structure, F-type ATPases have 2 components, F(1) - the catalytic core - and F(0) - the membrane proton channel. F(1) has five subunits: alpha(3), beta(3), gamma(1), delta(1), epsilon(1). F(0) has three main subunits: a(1), b(2) and c(10-14). The alpha and beta chains form an alternating ring which encloses part of the gamma chain. F(1) is attached to F(0) by a central stalk formed by the gamma and epsilon chains, while a peripheral stalk is formed by the delta and b chains.

Its subcellular location is the cell inner membrane. In terms of biological role, f(1)F(0) ATP synthase produces ATP from ADP in the presence of a proton or sodium gradient. F-type ATPases consist of two structural domains, F(1) containing the extramembraneous catalytic core and F(0) containing the membrane proton channel, linked together by a central stalk and a peripheral stalk. During catalysis, ATP synthesis in the catalytic domain of F(1) is coupled via a rotary mechanism of the central stalk subunits to proton translocation. Key component of the F(0) channel; it plays a direct role in translocation across the membrane. A homomeric c-ring of between 10-14 subunits forms the central stalk rotor element with the F(1) delta and epsilon subunits. The protein is ATP synthase subunit c of Acinetobacter baumannii (strain ACICU).